Reading from the N-terminus, the 20-residue chain is Major extrapallial fluid protein (20 aa).

Positions 1 to 20 are disordered; it reads NPVDDHHDDHHDAPIVEHHD.

As to quaternary structure, homodimer. Post-translationally, glycosylated.

Its function is as follows. Appears to be a building block of the soluble organic matrix of the shell. The protein binds calcium. The sequence is that of Major extrapallial fluid protein from Mytilus edulis (Blue mussel).